The following is a 128-amino-acid chain: MSDFKVPPKAKGFKRLFKALFYSKDGLKCAWAEESAFRQIVILALFCIVLASYLTKDFLEWGLLILPCFLSVVIELINSSIEKAVDFTGTEFHPLAKKAKDMASSAQLIGLIFWAFIWGRYLLTLYFN.

Position 34 (Glu34) interacts with a divalent metal cation. Helical transmembrane passes span 35-55 (SAFR…SYLT) and 58-78 (FLEW…ELIN). Glu75 serves as the catalytic Proton acceptor. Glu82 contributes to the a divalent metal cation binding site. A helical membrane pass occupies residues 108 to 128 (LIGLIFWAFIWGRYLLTLYFN).

It belongs to the bacterial diacylglycerol kinase family. It depends on Mg(2+) as a cofactor.

The protein localises to the cell inner membrane. It carries out the reaction a 1,2-diacyl-sn-glycerol + ATP = a 1,2-diacyl-sn-glycero-3-phosphate + ADP + H(+). Functionally, catalyzes the ATP-dependent phosphorylation of sn-l,2-diacylglycerol (DAG) to phosphatidic acid. Involved in the recycling of diacylglycerol produced as a by-product during membrane-derived oligosaccharide (MDO) biosynthesis. The polypeptide is Diacylglycerol kinase (dgkA) (Helicobacter pylori (strain J99 / ATCC 700824) (Campylobacter pylori J99)).